We begin with the raw amino-acid sequence, 326 residues long: Guanine nucleotide-binding protein subunit beta-like protein 1 (326 aa).

WD repeat units lie at residues 17–61 (GTQS…IVTT), 64–104 (GHGG…NTIM), 159–202 (ARPG…VCSQ), 205–244 (CHEE…SLQV), 250–291 (LTNP…AVLA), and 292–325 (FHSA…LYPC).

In terms of tissue distribution, expressed at low levels in most tissues and highly expressed in adult testis. Widely expressed in adult brain with striking regional distribution in forebrain, midbrain, and hindbrain structures, including the thalamus, hypothalamus, amygdala, hippocampus, pons.

Its subcellular location is the cytoplasm. It is found in the nucleus. In terms of biological role, acts as a critical regulator of DNA damage response (DDR) signaling via specifically regulating phosphatidylinositol 3-kinase-related protein kinase (PIKK) family proteins. The chain is Guanine nucleotide-binding protein subunit beta-like protein 1 (Gnb1l) from Mus musculus (Mouse).